Consider the following 396-residue polypeptide: MAKGKFERTKPHVNVGTIGHVDHGKTTLTAAITTVLASKFGGEAKGYDQIDAAPEEKARGITINTAHVEYETANRHYAHVDCPGHADYVKNMITGAAQMDGAILVCSAADGPMPQTREHILLARQVGVPYIIVFLNKCDMVDDAELLELVEMEVRELLDKYDFPGDKTPIIHGSAKLAMEGDKGPLGEQAIMKLADALDTYIPLPERAVDGAFLMPVEDVFSISGRGTVVTGRVERGVIKVGEEIEIVGIADTQKTTCTGVEMFRKLLDQGQAGDNVGILLRGTKREDVQRGQVLCKPGSIKPHTHFTGEIYVLSKDEGGRHTPFFNNYRPQFYFRTTDVTGAIELPEGKEMVMPGDNVSITVKLINPIAMEEGLRFAIREGGKTVGAGVVAKIIA.

One can recognise a tr-type G domain in the interval 10 to 206 (KPHVNVGTIG…ALDTYIPLPE (197 aa)). The tract at residues 19–26 (GHVDHGKT) is G1. Residue 19-26 (GHVDHGKT) coordinates GTP. Residue Thr26 participates in Mg(2+) binding. A G2 region spans residues 60–64 (GITIN). The interval 81–84 (DCPG) is G3. GTP-binding positions include 81–85 (DCPGH) and 136–139 (NKCD). Residues 136–139 (NKCD) form a G4 region. The segment at 174-176 (SAK) is G5.

This sequence belongs to the TRAFAC class translation factor GTPase superfamily. Classic translation factor GTPase family. EF-Tu/EF-1A subfamily. Monomer.

Its subcellular location is the cytoplasm. The enzyme catalyses GTP + H2O = GDP + phosphate + H(+). GTP hydrolase that promotes the GTP-dependent binding of aminoacyl-tRNA to the A-site of ribosomes during protein biosynthesis. This chain is Elongation factor Tu, found in Polaromonas sp. (strain JS666 / ATCC BAA-500).